The following is a 956-amino-acid chain: Phosphatidylinositol 4-kinase PIK1a (956 aa).

Residues 1 to 120 (MPVAPHELRD…QTVRKFINKL (120 aa)) enclose the PIK helical domain. The segment at 545-573 (SRDWAKSTPGSPVARSSQEDEKFYGNVSS) is disordered. In terms of domain architecture, PI3K/PI4K catalytic spans 658-939 (EDWNEKKHRI…YLIEKSVGSM (282 aa)). The G-loop stretch occupies residues 664–670 (KHRIRKS). The interval 805–813 (QIKDRHNGN) is catalytic loop. The tract at residues 824 to 848 (HIDFGFLLSNSPGSVGFEAAPFKLT) is activation loop.

Belongs to the PI3/PI4-kinase family. Type III PI4K subfamily.

It localises to the nucleus. The catalysed reaction is a 1,2-diacyl-sn-glycero-3-phospho-(1D-myo-inositol) + ATP = a 1,2-diacyl-sn-glycero-3-phospho-(1D-myo-inositol 4-phosphate) + ADP + H(+). In terms of biological role, acts on phosphatidylinositol (PI) in the first committed step in the production of the second messenger inositol 1,4,5,-trisphosphate. The protein is Phosphatidylinositol 4-kinase PIK1a (PIKA) of Candida albicans (strain SC5314 / ATCC MYA-2876) (Yeast).